Consider the following 484-residue polypeptide: Sialidase-4 (484 aa).

Positions 22–25 match the FRIP motif motif; sequence YRVP. Substrate-binding residues include R23 and R43. Residues D47 and D48 each act as proton acceptor in the active site. One copy of the BNR 1 repeat lies at 127-138; the sequence is VASRDAGLSWGS. Substrate is bound by residues Y177 and Y179. The BNR 2 repeat unit spans residues 200-211; it reads FYSDDHGRTWRC. Substrate contacts are provided by E222 and R242. One copy of the BNR 3 repeat lies at 251–262; the sequence is ALSTDEGTSFLP. The tract at residues 284 to 357 is disordered; it reads PAPAPNRPRD…GPRPGVSGDV (74 aa). Positions 336–345 are enriched in low complexity; sequence RLQPRGDGPR. R389 lines the substrate pocket. Residue Y419 is the Nucleophile of the active site. E440 is an active-site residue.

This sequence belongs to the glycosyl hydrolase 33 family. N-glycosylated. Predominant form in liver. Also expressed in brain, kidney and colon. In terms of tissue distribution, highly expressed in brain and at lower levels in kidney and liver.

It is found in the cell membrane. The protein localises to the endoplasmic reticulum membrane. Its subcellular location is the microsome membrane. The protein resides in the mitochondrion membrane. It localises to the cell projection. It is found in the neuron projection. The protein localises to the mitochondrion inner membrane. Its subcellular location is the mitochondrion outer membrane. The protein resides in the lysosome lumen. The enzyme catalyses Hydrolysis of alpha-(2-&gt;3)-, alpha-(2-&gt;6)-, alpha-(2-&gt;8)- glycosidic linkages of terminal sialic acid residues in oligosaccharides, glycoproteins, glycolipids, colominic acid and synthetic substrates.. It catalyses the reaction a ganglioside GM3 + H2O = a beta-D-galactosyl-(1-&gt;4)-beta-D-glucosyl-(1&lt;-&gt;1)-ceramide + N-acetylneuraminate. The catalysed reaction is a ganglioside GM3 (d18:1(4E)) + H2O = a beta-D-Gal-(1-&gt;4)-beta-D-Glc-(1&lt;-&gt;1)-Cer(d18:1(4E)) + N-acetylneuraminate. It carries out the reaction a ganglioside GM2 + H2O = a ganglioside GA2 + N-acetylneuraminate. The enzyme catalyses a ganglioside GM2 (d18:1(4E)) + H2O = a ganglioside GA2 (d18:1(4E)) + N-acetylneuraminate. It catalyses the reaction a ganglioside GD1a + H2O = a ganglioside GM1 + N-acetylneuraminate. The catalysed reaction is a ganglioside GD1a (d18:1(4E)) + H2O = a ganglioside GM1 (d18:1(4E)) + N-acetylneuraminate. It carries out the reaction a ganglioside GD3 + H2O = a ganglioside GM3 + N-acetylneuraminate. The enzyme catalyses a ganglioside GD3 (d18:1(4E)) + H2O = a ganglioside GM3 (d18:1(4E)) + N-acetylneuraminate. Functionally, exo-alpha-sialidase that catalyzes the hydrolytic cleavage of the terminal sialic acid (N-acetylneuraminic acid, Neu5Ac) of a glycan moiety in the catabolism of glycolipids, glycoproteins and oligosacharides. Efficiently hydrolyzes gangliosides including alpha-(2-&gt;3)-sialylated GD1a and GM3 and alpha-(2-&gt;8)-sialylated GD3. Hydrolyzes poly-alpha-(2-&gt;8)-sialylated neural cell adhesion molecule NCAM1 likely at growth cones, suppressing neurite outgrowth in hippocampal neurons. May desialylate sialyl Lewis A and X antigens at the cell surface, down-regulating these glycan epitopes recognized by SELE/E selectin in the initiation of cell adhesion and extravasation. Has sialidase activity toward mucin, fetuin and sialyllactose. The sequence is that of Sialidase-4 (NEU4) from Homo sapiens (Human).